The chain runs to 348 residues: Rhodopsin (348 aa).

Position 1 is an N-acetylmethionine (Met1). Topologically, residues 1 to 36 (MNGTEGPNFYVPFSNATGVVRSPFEYPQYYLAEPWQ) are extracellular. N-linked (GlcNAc...) asparagine glycans are attached at residues Asn2 and Asn15. The helical transmembrane segment at 37-61 (FSMLAAYMFMLIVLGFPINFLTLYV) threads the bilayer. Residues 62–73 (TVQHKKLRTPLN) are Cytoplasmic-facing. A helical transmembrane segment spans residues 74–96 (YILLNLAVADLFMVFGGFTTTLY). Residues 97–110 (TSLHGYFVFGPTGC) lie on the Extracellular side of the membrane. Cys110 and Cys187 are oxidised to a cystine. Residues 111-133 (NLEGFFATLGGEIALWSLVVLAI) traverse the membrane as a helical segment. Positions 134–136 (ERY) match the 'Ionic lock' involved in activated form stabilization motif. Residues 134–152 (ERYVVVCKPMSNFRFGENH) lie on the Cytoplasmic side of the membrane. The chain crosses the membrane as a helical span at residues 153 to 173 (AIMGLVFTWIMALACAAPPLV). The Extracellular segment spans residues 174-202 (GWSRYIPEGMQCSCGIDYYTLKPEVNNES). Residue Glu201 coordinates Zn(2+). Residues 203–224 (FVIYMFVVHFFIPLFVIFFCYG) form a helical membrane-spanning segment. Residues 225 to 252 (QLVFTVKEAAAQQQESATTQKAEKEVTR) are Cytoplasmic-facing. The chain crosses the membrane as a helical span at residues 253 to 274 (MVIIMVIAFLICWLPYAGVAFY). Residues 275-286 (IFTHQGSNFGPI) lie on the Extracellular side of the membrane. Gln279 provides a ligand contact to Zn(2+). Residues 287–308 (FMTLPAFFAKTASIYNPVIYIM) form a helical membrane-spanning segment. N6-(retinylidene)lysine is present on Lys296. Topologically, residues 309-348 (MNKQFRTCMITTLCCGKNPLGDDEASTTASKTETSQVAPA) are cytoplasmic. Residues Cys322 and Cys323 are each lipidated (S-palmitoyl cysteine). The interaction with SAG stretch occupies residues 330 to 348 (DDEASTTASKTETSQVAPA). Residue Ser334 is modified to Phosphoserine. Thr335 and Thr336 each carry phosphothreonine. Phosphoserine is present on Ser338. Residues Thr340 and Thr342 each carry the phosphothreonine modification. Ser343 is modified (phosphoserine).

It belongs to the G-protein coupled receptor 1 family. Opsin subfamily. In terms of assembly, homodimer. May form a complex composed of RHO, GRK1 and RCVRN in a Ca(2+)-dependent manner; RCVRN prevents the interaction between GRK1 and RHO. Interacts with GRK1. Interacts (phosphorylated form) with SAG. Interacts with GNAT1. Interacts with GNAT3. SAG and G-proteins compete for a common binding site. Interacts with PRCD; the interaction promotes PRCD stability. Forms a complex with ASAP1 and ARF4. Forms a complex with ASAP1, RAB11A, Rabin8/RAB3IP, ARF4 and RAB11FIP3; the complex regulates Golgi-to-cilia rhodopsin/RHO transport in photoreceptors. Post-translationally, phosphorylated on some or all of the serine and threonine residues present in the C-terminal region. In terms of processing, contains one covalently linked retinal chromophore. Upon light absorption, the covalently bound 11-cis-retinal is converted to all-trans-retinal. After hydrolysis of the Schiff base and release of the covalently bound all-trans-retinal, active rhodopsin is regenerated by binding of a fresh molecule of 11-cis-retinal.

The protein localises to the membrane. It localises to the cell projection. The protein resides in the cilium. It is found in the photoreceptor outer segment. Photoreceptor required for image-forming vision at low light intensity. Required for photoreceptor cell viability after birth. Light-induced isomerization of 11-cis to all-trans retinal triggers a conformational change that activates signaling via G-proteins. Subsequent receptor phosphorylation mediates displacement of the bound G-protein alpha subunit by the arrestin SAG and terminates signaling. The sequence is that of Rhodopsin (RHO) from Otolemur crassicaudatus (Brown greater galago).